A 349-amino-acid chain; its full sequence is Anthranilate phosphoribosyltransferase (349 aa).

5-phospho-alpha-D-ribose 1-diphosphate contacts are provided by residues G82, 85 to 86, 92 to 95, 110 to 118, and S122; these read GD, NVST, and KHGNRAVSG. G82 serves as a coordination point for anthranilate. Mg(2+) is bound at residue S94. Position 113 (N113) interacts with anthranilate. Anthranilate is bound at residue R168. Residues D227 and E228 each coordinate Mg(2+).

The protein belongs to the anthranilate phosphoribosyltransferase family. In terms of assembly, homodimer. Requires Mg(2+) as cofactor.

It carries out the reaction N-(5-phospho-beta-D-ribosyl)anthranilate + diphosphate = 5-phospho-alpha-D-ribose 1-diphosphate + anthranilate. It functions in the pathway amino-acid biosynthesis; L-tryptophan biosynthesis; L-tryptophan from chorismate: step 2/5. Catalyzes the transfer of the phosphoribosyl group of 5-phosphorylribose-1-pyrophosphate (PRPP) to anthranilate to yield N-(5'-phosphoribosyl)-anthranilate (PRA). The sequence is that of Anthranilate phosphoribosyltransferase from Pseudomonas syringae pv. tomato (strain ATCC BAA-871 / DC3000).